A 288-amino-acid polypeptide reads, in one-letter code: Shikimate dehydrogenase (NADP(+)) (288 aa).

Shikimate-binding positions include 14–16 (SIS) and T63. The Proton acceptor role is filled by K67. Residue E79 participates in NADP(+) binding. Residues N88 and D103 each contribute to the shikimate site. NADP(+)-binding positions include 127 to 131 (GSGGA), 151 to 156 (NRTYEK), and M219. Residue Y221 participates in shikimate binding. Position 242 (G242) interacts with NADP(+).

This sequence belongs to the shikimate dehydrogenase family. In terms of assembly, homodimer.

It catalyses the reaction shikimate + NADP(+) = 3-dehydroshikimate + NADPH + H(+). It functions in the pathway metabolic intermediate biosynthesis; chorismate biosynthesis; chorismate from D-erythrose 4-phosphate and phosphoenolpyruvate: step 4/7. Functionally, involved in the biosynthesis of the chorismate, which leads to the biosynthesis of aromatic amino acids. Catalyzes the reversible NADPH linked reduction of 3-dehydroshikimate (DHSA) to yield shikimate (SA). The sequence is that of Shikimate dehydrogenase (NADP(+)) from Caldicellulosiruptor bescii (strain ATCC BAA-1888 / DSM 6725 / KCTC 15123 / Z-1320) (Anaerocellum thermophilum).